Here is a 306-residue protein sequence, read N- to C-terminus: Protein STPG3 (306 aa).

A disordered region spans residues 210 to 230 (CSYTPLLPTSKPSGEKRPSPN).

The chain is Protein STPG3 from Mus musculus (Mouse).